We begin with the raw amino-acid sequence, 226 residues long: Ribonuclease 3 (226 aa).

Positions 7-129 constitute an RNase III domain; sequence LPRLCRTLGY…IIGAVYLDSD (123 aa). Residue Glu42 coordinates Mg(2+). The active site involves Asp46. Mg(2+)-binding residues include Asp115 and Glu118. Residue Glu118 is part of the active site. One can recognise a DRBM domain in the interval 156-226; that stretch reads DAKTLLQEHL…AAQVLELLKK (71 aa).

This sequence belongs to the ribonuclease III family. Homodimer. Requires Mg(2+) as cofactor.

Its subcellular location is the cytoplasm. It catalyses the reaction Endonucleolytic cleavage to 5'-phosphomonoester.. Its function is as follows. Digests double-stranded RNA. Involved in the processing of primary rRNA transcript to yield the immediate precursors to the large and small rRNAs (23S and 16S). Processes some mRNAs, and tRNAs when they are encoded in the rRNA operon. Processes pre-crRNA and tracrRNA of type II CRISPR loci if present in the organism. This is Ribonuclease 3 from Shewanella baltica (strain OS185).